The following is a 154-amino-acid chain: 17.8 kDa class I heat shock protein (154 aa).

Residues 40-154 (ESSAFANTRI…PEVKSIEISG (115 aa)) enclose the sHSP domain.

Belongs to the small heat shock protein (HSP20) family. In terms of assembly, forms oligomeric structures.

It is found in the cytoplasm. The chain is 17.8 kDa class I heat shock protein from Solanum lycopersicum (Tomato).